Here is a 1765-residue protein sequence, read N- to C-terminus: Sodium channel protein type 11 subunit alpha (1765 aa).

Topologically, residues 1–126 are cytoplasmic; that stretch reads MEERYYPVIF…PLRSLMIRIS (126 aa). The stretch at 115–403 is one I repeat; it reads FNPLRSLMIR…VTMAYEEQNR (289 aa). Residues 127 to 148 traverse the membrane as a helical segment; it reads VHSVFSMFIICTVIINCMFMAN. The Extracellular segment spans residues 149-157; the sequence is SMERSFDND. Residues 158–177 form a helical membrane-spanning segment; that stretch reads IPEYVFIGIYILEAVIKILA. The Cytoplasmic portion of the chain corresponds to 178–189; the sequence is RGFIVDEFSFLR. A helical transmembrane segment spans residues 190–209; sequence DPWNWLDFIVIGTAIATCFP. The Extracellular portion of the chain corresponds to 210-216; it reads GSQVNLS. N214 carries N-linked (GlcNAc...) asparagine glycosylation. The helical; Voltage-sensor transmembrane segment at 217 to 236 threads the bilayer; it reads ALRTFRVFRALKAISVISGL. The Cytoplasmic portion of the chain corresponds to 237 to 252; sequence KVIVGALLRSVKKLVD. The chain crosses the membrane as a helical span at residues 253–266; sequence VMVLTLFCLSIFAL. Over 267-339 the chain is Extracellular; sequence VGQQLFMGIL…PDNNYTKFDN (73 aa). C280 and C317 are joined by a disulfide. 2 N-linked (GlcNAc...) asparagine glycosylation sites follow: N319 and N333. An intramembrane region (pore-forming) is located at residues 340 to 364; that stretch reads FGWSFLAMFRVMTQDSWERLYRQIL. Residues 365 to 371 lie on the Extracellular side of the membrane; the sequence is RTSGIYF. The chain crosses the membrane as a helical span at residues 372 to 397; that stretch reads VFFFVVVIFLGSFYLLNLTLAVVTMA. The Cytoplasmic segment spans residues 398–567; the sequence is YEEQNRNVAA…WLCIKKVLRT (170 aa). One copy of the II repeat lies at 554 to 820; it reads CSPQWLCIKK…EGETRKTKVQ (267 aa). A helical membrane pass occupies residues 568–591; the sequence is IMTDPFTELAITICIIINTVFLAV. Over 592–602 the chain is Extracellular; the sequence is EHHNMDDNLKT. The chain crosses the membrane as a helical span at residues 603 to 626; it reads ILKIGNWVFTGIFIAEMCLKIIAL. At 627–634 the chain is on the cytoplasmic side; the sequence is DPYHYFRH. Residues 635 to 656 form a helical membrane-spanning segment; the sequence is GWNVFDSIVALLSLADVLYNTL. At 657-662 the chain is on the extracellular side; that stretch reads SDNNRS. A glycan (N-linked (GlcNAc...) asparagine) is linked at N660. A helical; Voltage-sensor membrane pass occupies residues 663-682; the sequence is FLASLRVLRVFKLAKSWPTL. The Cytoplasmic portion of the chain corresponds to 683 to 697; it reads NTLIKIIGHSVGALG. A helical membrane pass occupies residues 698–720; the sequence is NLTVVLTIVVFIFSVVGMRLFGT. Residues 721–741 are Extracellular-facing; sequence KFNKTAYATQERPRRRWHMDN. N723 carries an N-linked (GlcNAc...) asparagine glycan. The segment at residues 742-762 is an intramembrane region (pore-forming); the sequence is FYHSFLVVFRILCGEWIENMW. Residues 763-772 are Extracellular-facing; the sequence is GCMQDMDGSP. A disulfide bridge connects residues C764 and C774. Residues 773-798 traverse the membrane as a helical segment; the sequence is LCIIVFVLIMVIGKLVVLNLFIALLL. Residues 799 to 1029 lie on the Cytoplasmic side of the membrane; it reads NSFSNEEKDG…WWNIRKTCYQ (231 aa). The III repeat unit spans residues 1022 to 1319; sequence NIRKTCYQIV…KKYYNAMKKL (298 aa). The helical transmembrane segment at 1030-1052 threads the bilayer; the sequence is IVKHSWFESFIIFVILLSSGALI. The Extracellular portion of the chain corresponds to 1053–1066; sequence FEDVNLPSRPQVEK. A helical transmembrane segment spans residues 1067–1092; sequence LLRCTDNIFTFIFLLEMILKWVAFGF. Residues 1093 to 1098 lie on the Cytoplasmic side of the membrane; that stretch reads RRYFTS. The chain crosses the membrane as a helical span at residues 1099–1116; that stretch reads AWCWLDFLIVVVSVLSLM. Residue N1117 is a topological domain, extracellular. Residues 1118–1139 traverse the membrane as a helical; Voltage-sensor segment; that stretch reads LPSLKSFRTLRALRPLRALSQF. Residues 1140-1158 lie on the Cytoplasmic side of the membrane; it reads EGMKVVVYALISAIPAILN. A helical membrane pass occupies residues 1159-1180; sequence VLLVCLIFWLVFCILGVNLFSG. The Extracellular portion of the chain corresponds to 1181-1223; that stretch reads KFGRCINGTDINMYLDFTEVPNRSQCNISNYSWKVPQVNFDNV. N-linked (GlcNAc...) asparagine glycans are attached at residues N1187, N1202, N1207, and N1210. Residues 1224–1245 constitute an intramembrane region (pore-forming); sequence GNAYLALLQVATYKGWLEIMNA. Residues 1246 to 1261 are Extracellular-facing; the sequence is AVDSREKDEQPDFEAN. A helical transmembrane segment spans residues 1262 to 1288; that stretch reads LYAYLYFVVFIIFGSFFTLNLFIGVII. Topologically, residues 1289 to 1341 are cytoplasmic; that stretch reads DNFNQQQKKLGGQDIFMTEEQKKYYNAMKKLGTKKPQKPIPRPLNKCQAFVFD. The IV repeat unit spans residues 1328–1619; the sequence is IPRPLNKCQA…WEKFDPEASQ (292 aa). A helical transmembrane segment spans residues 1342–1365; that stretch reads LVTSQVFDVIILGLIVLNMIIMMA. Residues 1366 to 1376 lie on the Extracellular side of the membrane; sequence ESADQPKDVKK. The helical transmembrane segment at 1377 to 1400 threads the bilayer; it reads TFDILNIAFVVIFTIECLIKVFAL. Over 1401 to 1406 the chain is Cytoplasmic; that stretch reads RQHYFT. The chain crosses the membrane as a helical span at residues 1407-1430; that stretch reads NGWNLFDCVVVVLSIISTLVSRLE. The Extracellular portion of the chain corresponds to 1431–1440; the sequence is DSDISFPPTL. A helical; Voltage-sensor membrane pass occupies residues 1441-1463; it reads FRVVRLARIGRILRLVRAARGIR. Topologically, residues 1464 to 1478 are cytoplasmic; it reads TLLFALMMSLPSLFN. Residues 1479–1501 traverse the membrane as a helical segment; that stretch reads IGLLLFLVMFIYAIFGMSWFSKV. Topologically, residues 1502 to 1515 are extracellular; it reads KKGSGIDDIFNFET. Residues 1516 to 1538 constitute an intramembrane region (pore-forming); sequence FTGSMLCLFQITTSAGWDTLLNP. The Extracellular portion of the chain corresponds to 1539 to 1559; sequence MLEAKEHCNSSSQDSCQQPQI. N-linked (GlcNAc...) asparagine glycosylation is present at N1547. The chain crosses the membrane as a helical span at residues 1560-1584; the sequence is AVVYFVSYIIISFLIVVNMYIAVIL. At 1585 to 1765 the chain is on the cytoplasmic side; that stretch reads ENFNTATEES…DVAKVKVHND (181 aa).

Belongs to the sodium channel (TC 1.A.1.10) family. Nav1.9/SCN11A subfamily. As to quaternary structure, the voltage-resistant sodium channel consists of an ion conducting pore forming alpha-subunit regulated by one or more auxiliary subunits SCN1B, SCN2B and SCN3B. Expressed (at protein level) in myenteric sensory neurons. Expressed in small sensory neurons of the dorsal root ganglia (C-fiber neurons) and trigeminal ganglia.

It is found in the cell membrane. The enzyme catalyses Na(+)(in) = Na(+)(out). Activity is not sensitive to inhibition by tetrodotoxin. Sodium channel mediating the voltage-dependent sodium ion permeability of excitable membranes. Assuming opened or closed conformations in response to the voltage difference across the membrane, the protein forms a sodium-selective channel through which sodium ions may pass in accordance with their electrochemical gradient. Involved in membrane depolarization during action potential in nociceptors which function as key relay stations for the electrical transmission of pain signals from the periphery to the central nervous system. Also involved in rapid BDNF-evoked neuronal depolarization. In Rattus norvegicus (Rat), this protein is Sodium channel protein type 11 subunit alpha.